The chain runs to 2155 residues: Alpha-tectorin (2155 aa).

The first 22 residues, 1–22 (MNYSSFLRIWVSFIFALVQHQA), serve as a signal peptide directing secretion. Asparagine 34, asparagine 187, asparagine 215, asparagine 278, asparagine 455, asparagine 506, asparagine 528, and asparagine 560 each carry an N-linked (GlcNAc...) asparagine glycan. One can recognise an NIDO domain in the interval 98–252 (PFWADVHNGI…GRWAFKVDGK (155 aa)). Residues 260–314 (CTSRGQFLRRGEVFWDDLNCTVKCRCLDFNNEIYCQEASCSPYEVCEPKGKFFYC) enclose the VWFC domain. Residues 320 to 500 (STCVVFGEPH…RVYHADWKCD (181 aa)) enclose the VWFD 1 domain. Intrachain disulfides connect cysteine 322/cysteine 461 and cysteine 344/cysteine 499. The TIL 1 domain occupies 597–650 (CPSFSHYSVCTSSCPDTCSDLTASRNCATPCTEGCECNQGFVLSTSQCVPLHKC). 9 N-linked (GlcNAc...) asparagine glycosylation sites follow: asparagine 670, asparagine 687, asparagine 813, asparagine 843, asparagine 855, asparagine 898, asparagine 920, asparagine 931, and asparagine 949. The VWFD 2 domain occupies 711–886 (TVCLLSQNQV…SWTTFEEICN (176 aa)). Cysteines 713 and 849 form a disulfide. In terms of domain architecture, TIL 2 spans 984–1036 (CPENSHFEECITCTETCETLTLGPICVDSCSEGCQCDEGYALLGSQCVTRSEC). N-linked (GlcNAc...) asparagine glycans are attached at residues asparagine 1048, asparagine 1235, and asparagine 1364. The VWFD 3 domain maps to 1098–1278 (ASCIVSGYGH…SWVKRDTFCQ (181 aa)). Cystine bridges form between cysteine 1100-cysteine 1241 and cysteine 1122-cysteine 1277. One can recognise a TIL 3 domain in the interval 1372–1425 (CPPNSHYESCVSVCQPRCAAIRLKSDCSHYCVEGCHCDAGYVLNGKSCILPHSC). A VWFD 4 domain is found at 1485–1666 (SYCLAAGGGV…QKRPLAPSCN (182 aa)). 7 disulfide bridges follow: cysteine 1487–cysteine 1622, cysteine 1509–cysteine 1665, cysteine 1717–cysteine 1775, cysteine 1741–cysteine 1784, cysteine 1786–cysteine 1818, cysteine 1806–cysteine 1898, and cysteine 1837–cysteine 1857. 10 N-linked (GlcNAc...) asparagine glycosylation sites follow: asparagine 1538, asparagine 1565, asparagine 1756, asparagine 1772, asparagine 1794, asparagine 1851, asparagine 1864, asparagine 1880, asparagine 1920, and asparagine 1939. In terms of domain architecture, ZP spans 1805 to 2059 (TCKAAQMEVS…YSCKITCPHN (255 aa)). Intrachain disulfides connect cysteine 1980/cysteine 2040, cysteine 2001/cysteine 2056, and cysteine 2045/cysteine 2052. Asparagine 2091 is lipidated: GPI-anchor amidated asparagine. A propeptide spans 2092-2155 (GGCEQICTSR…HFVYKSGTTS (64 aa)) (removed in mature form).

In terms of assembly, may form homomeric filament after self-association or heteromeric filament after association with beta-tectorin. Interacts with CEACAM16. The presence of a hydrophobic C-terminus preceded by a potential cleavage site strongly suggests that tectorins are synthesized as glycosylphosphatidylinositol-linked, membrane-bound precursors. Tectorins are targeted to the apical surface of the inner ear epithelia by the lipid and proteolytically released into the extracellular compartment.

The protein resides in the cell membrane. Its subcellular location is the secreted. The protein localises to the extracellular space. It is found in the extracellular matrix. One of the major non-collagenous components of the tectorial membrane. The tectorial membrane is an extracellular matrix of the inner ear that covers the neuroepithelium of the cochlea and contacts the stereocilia bundles of specialized sensory hair cells. Sound induces movement of these hair cells relative to the tectorial membrane, deflects the stereocilia and leads to fluctuations in hair-cell membrane potential, transducing sound into electrical signals. This is Alpha-tectorin (TECTA) from Homo sapiens (Human).